A 63-amino-acid polypeptide reads, in one-letter code: UPF0337 protein Atu0782 (63 aa).

Residues 1 to 63 (MGSTSDKIAG…DAVKGAVDRM (63 aa)) form a disordered region. A compositionally biased stretch (basic and acidic residues) spans 51 to 63 (KAKDAVKGAVDRM).

This sequence belongs to the UPF0337 (CsbD) family.

The chain is UPF0337 protein Atu0782 from Agrobacterium fabrum (strain C58 / ATCC 33970) (Agrobacterium tumefaciens (strain C58)).